The sequence spans 130 residues: S-adenosylmethionine decarboxylase proenzyme (130 aa).

The active-site Schiff-base intermediate with substrate; via pyruvic acid is the serine 66. At serine 66 the chain carries Pyruvic acid (Ser); by autocatalysis. The Proton acceptor; for processing activity role is filled by histidine 71. Cysteine 86 acts as the Proton donor; for catalytic activity in catalysis.

This sequence belongs to the prokaryotic AdoMetDC family. Type 1 subfamily. As to quaternary structure, heterotetramer of two alpha and two beta chains arranged as a dimer of alpha/beta heterodimers. It depends on pyruvate as a cofactor. In terms of processing, is synthesized initially as an inactive proenzyme. Formation of the active enzyme involves a self-maturation process in which the active site pyruvoyl group is generated from an internal serine residue via an autocatalytic post-translational modification. Two non-identical subunits are generated from the proenzyme in this reaction, and the pyruvate is formed at the N-terminus of the alpha chain, which is derived from the carboxyl end of the proenzyme. The post-translation cleavage follows an unusual pathway, termed non-hydrolytic serinolysis, in which the side chain hydroxyl group of the serine supplies its oxygen atom to form the C-terminus of the beta chain, while the remainder of the serine residue undergoes an oxidative deamination to produce ammonia and the pyruvoyl group blocking the N-terminus of the alpha chain.

The enzyme catalyses S-adenosyl-L-methionine + H(+) = S-adenosyl 3-(methylsulfanyl)propylamine + CO2. It participates in amine and polyamine biosynthesis; S-adenosylmethioninamine biosynthesis; S-adenosylmethioninamine from S-adenosyl-L-methionine: step 1/1. Its function is as follows. Catalyzes the decarboxylation of S-adenosylmethionine to S-adenosylmethioninamine (dcAdoMet), the propylamine donor required for the synthesis of the polyamines spermine and spermidine from the diamine putrescine. This chain is S-adenosylmethionine decarboxylase proenzyme, found in Bacillus cytotoxicus (strain DSM 22905 / CIP 110041 / 391-98 / NVH 391-98).